A 334-amino-acid polypeptide reads, in one-letter code: Cathepsin L2 (334 aa).

The first 17 residues, 1–17, serve as a signal peptide directing secretion; it reads MNLSLVLAAFCLGIASA. Residues 18-113 constitute a propeptide, activation peptide; it reads VPKFDQNLDT…KVFREPLFLD (96 aa). Disulfide bonds link Cys135–Cys178 and Cys169–Cys211. Cys138 is a catalytic residue. N-linked (GlcNAc...) asparagine glycosylation occurs at Asn221. A disulfide bond links Cys270 and Cys323. His277 is a catalytic residue. Asn292 carries an N-linked (GlcNAc...) asparagine glycan. Residue Asn301 is part of the active site.

Belongs to the peptidase C1 family. Predominantly expressed in the thymus and testis. Also expressed in corneal epithelium, and to a lesser extent in conjunctival epithelium and skin.

The protein localises to the lysosome. The enzyme catalyses The recombinant enzyme hydrolyzes proteins (serum albumin, collagen) and synthetic substrates (Z-Phe-Arg-NHMec &gt; Z-Leu-Arg-NHMec &gt; Z-Val-Arg-NHMec).. Inhibited by CST6. Its function is as follows. Cysteine protease. May have an important role in corneal physiology. This is Cathepsin L2 (CTSV) from Homo sapiens (Human).